The primary structure comprises 63 residues: ATPase inhibitor, mitochondrial (63 aa).

Residues 1-23 (TAGATGATRQDGSTDAFEKREKA) form a disordered region. Residues 18–62 (EKREKAQEDLYIRQHEKEQLEALKESLKKQKKSLDDLEBKIDDLT) adopt a coiled-coil conformation.

Belongs to the ATPase inhibitor family.

The protein resides in the mitochondrion. Its function is as follows. This protein forms a one-to-one complex with ATPase to inhibit the enzyme activity completely. This is ATPase inhibitor, mitochondrial from Cyberlindnera jadinii (Torula yeast).